The sequence spans 284 residues: 4-diphosphocytidyl-2-C-methyl-D-erythritol kinase (284 aa).

The active site involves K14. 98–108 (PMGGGLGGGSS) is a binding site for ATP. The active site involves D140.

Belongs to the GHMP kinase family. IspE subfamily.

The catalysed reaction is 4-CDP-2-C-methyl-D-erythritol + ATP = 4-CDP-2-C-methyl-D-erythritol 2-phosphate + ADP + H(+). The protein operates within isoprenoid biosynthesis; isopentenyl diphosphate biosynthesis via DXP pathway; isopentenyl diphosphate from 1-deoxy-D-xylulose 5-phosphate: step 3/6. Functionally, catalyzes the phosphorylation of the position 2 hydroxy group of 4-diphosphocytidyl-2C-methyl-D-erythritol. The polypeptide is 4-diphosphocytidyl-2-C-methyl-D-erythritol kinase (Shewanella baltica (strain OS185)).